Reading from the N-terminus, the 1010-residue chain is Retinoblastoma-related protein 3 (1010 aa).

Residues 416 to 616 form a domain A region; that stretch reads TPVSTAMTTA…EKGSSMYNSL (201 aa). A pocket region spans residues 416–858; the sequence is TPVSTAMTTA…NEVFIPAVKS (443 aa). The interval 617–727 is spacer; it reads IVARPALSVE…PAAGGETCAE (111 aa). The tract at residues 728 to 858 is domain B; sequence TGIGVFFSKI…NEVFIPAVKS (131 aa). 2 disordered regions span residues 867-889 and 986-1010; these read ASAS…FPES and GSDR…PSDS.

It belongs to the retinoblastoma protein (RB) family.

Its subcellular location is the nucleus. Functionally, regulator of biological processes that recruits a histone deacetylase to control gene transcription. May play a role in the entry into mitosis, negatively regulating the cell proliferation. Formation of stable complexes with geminiviridae replication-associated proteins may create a cellular environment which favors viral DNA replication. In Zea mays (Maize), this protein is Retinoblastoma-related protein 3 (RBR3).